Here is a 177-residue protein sequence, read N- to C-terminus: Large ribosomal subunit protein uL6 (177 aa).

Belongs to the universal ribosomal protein uL6 family. As to quaternary structure, part of the 50S ribosomal subunit.

In terms of biological role, this protein binds to the 23S rRNA, and is important in its secondary structure. It is located near the subunit interface in the base of the L7/L12 stalk, and near the tRNA binding site of the peptidyltransferase center. The polypeptide is Large ribosomal subunit protein uL6 (Sodalis glossinidius (strain morsitans)).